Consider the following 179-residue polypeptide: Acireductone dioxygenase (179 aa).

Residues His99, His101, Glu105, and His143 each coordinate Fe(2+). Positions 99, 101, 105, and 143 each coordinate Ni(2+).

This sequence belongs to the acireductone dioxygenase (ARD) family. In terms of assembly, monomer. Fe(2+) is required as a cofactor. Requires Ni(2+) as cofactor.

The enzyme catalyses 1,2-dihydroxy-5-(methylsulfanyl)pent-1-en-3-one + O2 = 3-(methylsulfanyl)propanoate + CO + formate + 2 H(+). It carries out the reaction 1,2-dihydroxy-5-(methylsulfanyl)pent-1-en-3-one + O2 = 4-methylsulfanyl-2-oxobutanoate + formate + 2 H(+). Its pathway is amino-acid biosynthesis; L-methionine biosynthesis via salvage pathway; L-methionine from S-methyl-5-thio-alpha-D-ribose 1-phosphate: step 5/6. In terms of biological role, catalyzes 2 different reactions between oxygen and the acireductone 1,2-dihydroxy-3-keto-5-methylthiopentene (DHK-MTPene) depending upon the metal bound in the active site. Fe-containing acireductone dioxygenase (Fe-ARD) produces formate and 2-keto-4-methylthiobutyrate (KMTB), the alpha-ketoacid precursor of methionine in the methionine recycle pathway. Ni-containing acireductone dioxygenase (Ni-ARD) produces methylthiopropionate, carbon monoxide and formate, and does not lie on the methionine recycle pathway. This Sulfurihydrogenibium sp. (strain YO3AOP1) protein is Acireductone dioxygenase.